The following is a 277-amino-acid chain: Probable septum site-determining protein MinC (277 aa).

The disordered stretch occupies residues 107 to 168; that stretch reads TEGLLPGRKG…ESGPQVSHYD (62 aa). Residues 122–142 show a composition bias toward basic and acidic residues; that stretch reads GKPDGKAAEGRAPDHGTEGRA.

The protein belongs to the MinC family. In terms of assembly, interacts with MinD and FtsZ.

Functionally, cell division inhibitor that blocks the formation of polar Z ring septums. Rapidly oscillates between the poles of the cell to destabilize FtsZ filaments that have formed before they mature into polar Z rings. Prevents FtsZ polymerization. The protein is Probable septum site-determining protein MinC of Mesorhizobium japonicum (strain LMG 29417 / CECT 9101 / MAFF 303099) (Mesorhizobium loti (strain MAFF 303099)).